Here is a 908-residue protein sequence, read N- to C-terminus: Translation initiation factor IF-2 (908 aa).

Disordered regions lie at residues 122-180 (PVVE…VDDA) and 203-267 (EKAR…AVKK). A compositionally biased stretch (acidic residues) spans 132–143 (VAAEPEVVEAPE). A compositionally biased stretch (low complexity) spans 157–166 (EEPAAPAAPV). The span at 223-248 (AKEDARPTKHVEDLAKLKKPHDKKDE) shows a compositional bias: basic and acidic residues. A compositionally biased stretch (basic residues) spans 256–267 (KHNKKAGKAVKK). The tr-type G domain maps to 409–578 (PRAPIVTVMG…ALQAELLELS (170 aa)). A G1 region spans residues 418–425 (GHVDHGKT). 418-425 (GHVDHGKT) is a binding site for GTP. Residues 443–447 (GITQH) form a G2 region. Residues 464 to 467 (DTPG) are G3. GTP contacts are provided by residues 464 to 468 (DTPGH) and 518 to 521 (NKMD). Positions 518-521 (NKMD) are G4. The tract at residues 554-556 (SAH) is G5.

The protein belongs to the TRAFAC class translation factor GTPase superfamily. Classic translation factor GTPase family. IF-2 subfamily.

It is found in the cytoplasm. One of the essential components for the initiation of protein synthesis. Protects formylmethionyl-tRNA from spontaneous hydrolysis and promotes its binding to the 30S ribosomal subunits. Also involved in the hydrolysis of GTP during the formation of the 70S ribosomal complex. The chain is Translation initiation factor IF-2 from Saccharophagus degradans (strain 2-40 / ATCC 43961 / DSM 17024).